Consider the following 158-residue polypeptide: Ribonuclease HI (158 aa).

Positions 3 to 144 (ELKLIHIFTD…CDQLARAAAE (142 aa)) constitute an RNase H type-1 domain. Mg(2+)-binding residues include Asp-12, Glu-50, Asp-72, and Asp-136.

This sequence belongs to the RNase H family. Monomer. Mg(2+) is required as a cofactor.

Its subcellular location is the cytoplasm. It carries out the reaction Endonucleolytic cleavage to 5'-phosphomonoester.. In terms of biological role, endonuclease that specifically degrades the RNA of RNA-DNA hybrids. The sequence is that of Ribonuclease HI from Shewanella oneidensis (strain ATCC 700550 / JCM 31522 / CIP 106686 / LMG 19005 / NCIMB 14063 / MR-1).